The following is a 503-amino-acid chain: MDLIPNFSMETWLLLVISLVLLYLYGTHSHGIFKKLGIPGPKPLPFLGTILAYRKGFWEFDKYCHKKYGKLWGLYDGRQPVLAITDPDIIKTVLVKECYSTFTNRRNFGPVGILKKAISISEDEEWKRIRALLSPTFTSGKLKEMFPIINQYTDMLVRNMRQGSEEGKPTSMKDIFGAYSMDVITATSFGVNVDSLNNPQDPFVEKVKKLLKFDIFDPLFLSVTLFPFLTPLFEALNVSMFPRDVIDFFKTSVERMKENRMKEKEKQRMDFLQLMINSQNSKVKDSHKALSDVEIVAQSVIFIFAGYETTSSALSFVLYLLAIHPDIQKKLQDEIDAALPNKAHATYDTLLQMEYLDMVVNETLRLYPIAGRLERVCKTDVEINGVFIPKGTVVMIPTFALHKDPHYWPEPEEFRPERFSKKNQDNINPYMYLPFGNGPRNCIGMRFALMNMKVALFRVLQNFSFQPCKETQIPLKLSKQGLLQPEKPLLLKVVSRDETVNGA.

Cysteine 442 provides a ligand contact to heme.

It belongs to the cytochrome P450 family. It depends on heme as a cofactor. Mainly expressed in olfactory epithelium.

It localises to the endoplasmic reticulum membrane. Its subcellular location is the microsome membrane. The enzyme catalyses an organic molecule + reduced [NADPH--hemoprotein reductase] + O2 = an alcohol + oxidized [NADPH--hemoprotein reductase] + H2O + H(+). This isozyme seems to be implicated in olfaction. Active in the demethylation of erythromycin as well as benzphetamine. The sequence is that of Cytochrome P450 3A9 (Cyp3a9) from Rattus norvegicus (Rat).